A 1142-amino-acid chain; its full sequence is ABC transporter F family member 4 (1142 aa).

The interval Met-1 to Lys-564 is disordered. Composition is skewed to low complexity over residues Pro-121–Gln-143, Pro-153–Lys-166, and Pro-182–Lys-195. 2 stretches are compositionally biased toward acidic residues: residues Ser-203–Val-212 and Glu-233–Glu-244. Basic residues-rich tracts occupy residues Lys-249–Lys-261 and Lys-280–Ser-290. The span at Glu-295–Glu-306 shows a compositional bias: acidic residues. A compositionally biased stretch (basic and acidic residues) spans Asn-314–Glu-328. The segment covering Glu-329–Glu-340 has biased composition (acidic residues). Basic residues predominate over residues Lys-377 to Ser-387. Composition is skewed to acidic residues over residues Glu-392 to Glu-404 and Glu-441 to Glu-451. Over residues Ser-456–Lys-467 the composition is skewed to basic residues. Positions Glu-471 to Glu-480 are enriched in acidic residues. Positions Ser-485–Ser-496 are enriched in basic residues. A compositionally biased stretch (acidic residues) spans Glu-501–Glu-518. Residues Ala-530–Lys-548 show a composition bias toward basic residues. ABC transporter domains are found at residues Ile-604 to Glu-857 and Leu-923 to Val-1139. ATP contacts are provided by residues Gly-636–Ser-643 and Gly-956–Ser-963.

The protein belongs to the ABC transporter superfamily.

This Dictyostelium discoideum (Social amoeba) protein is ABC transporter F family member 4 (abcF4).